We begin with the raw amino-acid sequence, 351 residues long: Photosystem II D2 protein (351 aa).

Residues Thr39 to Thr59 form a helical membrane-spanning segment. His116 provides a ligand contact to chlorophyll a. A helical membrane pass occupies residues Gly123 to Pro139. Pheophytin a-binding residues include Gln128 and Asn141. Residues Val151–Ser164 form a helical membrane-spanning segment. A chlorophyll a-binding site is contributed by His196. The chain crosses the membrane as a helical span at residues Gly206–Glu226. Positions 213 and 260 each coordinate a plastoquinone. Position 213 (His213) interacts with Fe cation. Residue His267 coordinates Fe cation. The helical transmembrane segment at Gly277–Arg293 threads the bilayer.

This sequence belongs to the reaction center PufL/M/PsbA/D family. PSII is composed of 1 copy each of membrane proteins PsbA, PsbB, PsbC, PsbD, PsbE, PsbF, PsbH, PsbI, PsbJ, PsbK, PsbL, PsbM, PsbT, PsbX, PsbY, PsbZ, Psb30/Ycf12, peripheral proteins PsbO, CyanoQ (PsbQ), PsbU, PsbV and a large number of cofactors. It forms dimeric complexes. Requires The D1/D2 heterodimer binds P680, chlorophylls that are the primary electron donor of PSII, and subsequent electron acceptors. It shares a non-heme iron and each subunit binds pheophytin, quinone, additional chlorophylls, carotenoids and lipids. There is also a Cl(-1) ion associated with D1 and D2, which is required for oxygen evolution. The PSII complex binds additional chlorophylls, carotenoids and specific lipids. as cofactor.

Its subcellular location is the host cellular thylakoid membrane. The enzyme catalyses 2 a plastoquinone + 4 hnu + 2 H2O = 2 a plastoquinol + O2. Photosystem II (PSII) is a light-driven water:plastoquinone oxidoreductase that uses light energy to abstract electrons from H(2)O, generating O(2) and a proton gradient subsequently used for ATP formation. It consists of a core antenna complex that captures photons, and an electron transfer chain that converts photonic excitation into a charge separation. The D1/D2 (PsbA/PsbD) reaction center heterodimer binds P680, the primary electron donor of PSII as well as several subsequent electron acceptors. D2 is needed for assembly of a stable PSII complex. The sequence is that of Photosystem II D2 protein (psbD) from Synechococcus.